A 43-amino-acid chain; its full sequence is Protein PsbN (43 aa).

A helical transmembrane segment spans residues 7–27; that stretch reads VAIFISCLLVSFTGYALYTAF.

Belongs to the PsbN family.

It localises to the plastid. The protein localises to the chloroplast thylakoid membrane. In terms of biological role, may play a role in photosystem I and II biogenesis. This Zygnema circumcarinatum (Green alga) protein is Protein PsbN.